We begin with the raw amino-acid sequence, 614 residues long: MIKKASLLTACSVTAFSAWAQDTSPDTLVVTAIRFEQPRSTVLAPTTVVTRQDIDRWQSTSVNDVLRRLPGVDITQNGGSGQLSSIFIRGTNASHVLVLIDGVRLNLAGVSGSADLSQFPIALVQRIEYIRGPRSAVYGSDAIGGVVNIITTRDEPGTEISAGWGSNSYQNYDVSTQQQLGDKTRVTLLGDYAHTHGYDVVAYGNTGTQAQTDNDGFLSKTLYGALEHNFTDAWSGFVRGYGYDNRTNYDAYYSPGSPLLDTRKLYSQSWDAGLRYNGELIKSQLITSYSHSKDYNYDPHYGRYDSSATLDEMKQYTVQWANNVIVGHGSIGAGVDWQKQTTTPGTGYVEDGYDQRNTGIYLTGLQQVGDFTFEGAARSDDNSQFGRHGTWQTSAGWEFIEGYRFIASYGTSYKAPNLGQLYGFYGNPNLDPEKSKQWEGAFEGLTAGVNWRISGYRNDVSDLIYYDDHTLKYYNEGKARIKGVEATANFDTGPLTHTVSYDYVDARNAITDTPLLRRAKQQVKYQLDWQLYDFDWGITYQYLGTRYDKDYSSYPYQTVKMGGVSLWDLAVAYPVTSHLTVRGKIANLFDKDYETVYGYQTAGREYTLSGSYTF.

The N-terminal stretch at 1–20 is a signal peptide; that stretch reads MIKKASLLTACSVTAFSAWA. The TonB box signature appears at 26-33; it reads DTLVVTAI. The TBDR plug domain occupies 38–152; sequence PRSTVLAPTT…IGGVVNIITT (115 aa). Cyanocob(III)alamin-binding positions include L83, S85, N92, and 110–111; that span reads VS. One can recognise a TBDR beta-barrel domain in the interval 155 to 614; sequence EPGTEISAGW…EYTLSGSYTF (460 aa). 3 beta stranded membrane-spanning segments follow: residues 158-165, 169-178, and 184-195; these read TEISAGWG, YQNYDVSTQQ, and TRVTLLGDYAHT. Ca(2+)-binding residues include D199, Q211, D213, and D215. Beta stranded transmembrane passes span 217–227 and 232–248; these read FLSKTLYGALE and DAWS…NRTN. The Ca(2+) site is built by Y249 and D250. A251 contacts cyanocob(III)alamin. D261 provides a ligand contact to Ca(2+). The next 14 beta stranded transmembrane spans lie at 263-277, 279-296, 309-325, 328-337, 353-369, 371-381, 385-400, 403-417, 434-443, 449-458, 473-490, 494-509, 517-529, and 535-550; these read RKLY…LRYN, ELIK…KDYN, TLDE…NNVI, HGSIGAGVDW, YDQR…QQVG, FTFEGAARSDD, FGRH…WEFI, YRFI…KAPN, KSKQWEGAFE, VNWRISGYRN, YYNE…TANF, PLTH…ARNA, RRAK…QLDW, and DWGI…YDKD. T309 contributes to the cyanocob(III)alamin binding site. A cyanocob(III)alamin-binding site is contributed by R517. Y551 contributes to the cyanocob(III)alamin binding site. The next 3 beta stranded transmembrane spans lie at 558-572, 585-596, and 602-614; these read TVKM…LAVA, IANLFDKDYETV, and AGRE…SYTF. The TonB C-terminal box motif lies at 597–614; the sequence is YGYQTAGREYTLSGSYTF.

It belongs to the TonB-dependent receptor family. BtuB (TC 1.B.14.3.1) subfamily.

Its subcellular location is the cell outer membrane. Involved in the active translocation of vitamin B12 (cyanocobalamin) across the outer membrane to the periplasmic space. It derives its energy for transport by interacting with the trans-periplasmic membrane protein TonB. This Shigella flexneri serotype 5b (strain 8401) protein is Vitamin B12 transporter BtuB.